Here is a 68-residue protein sequence, read N- to C-terminus: Large ribosomal subunit protein uL29 (68 aa).

Belongs to the universal ribosomal protein uL29 family.

This Limosilactobacillus fermentum (strain NBRC 3956 / LMG 18251) (Lactobacillus fermentum) protein is Large ribosomal subunit protein uL29.